We begin with the raw amino-acid sequence, 192 residues long: U1 small nuclear ribonucleoprotein C (192 aa).

A Matrin-type zinc finger spans residues 4 to 36 (YYCEYCDIYLTHSSPVGRRQHNQGRKHISAKIE). Residues 118-192 (PGANKYPNNN…FVNKNSEQPN (75 aa)) form a disordered region. Residues 133-154 (RISNTPKPYNNYTNKPITNSPY) are compositionally biased toward polar residues. Over residues 164-173 (NNENSNNFSN) the composition is skewed to low complexity. Residues 174 to 192 (YQMNKDNSNFVNKNSEQPN) are compositionally biased toward polar residues.

This sequence belongs to the U1 small nuclear ribonucleoprotein C family. As to quaternary structure, U1 snRNP is composed of the 7 core Sm proteins B/B', D1, D2, D3, E, F and G that assemble in a heptameric protein ring on the Sm site of the small nuclear RNA to form the core snRNP, and at least 3 U1 snRNP-specific proteins U1-70K, U1-A and U1-C. U1-C interacts with U1 snRNA and the 5' splice-site region of the pre-mRNA.

Its subcellular location is the nucleus. Component of the spliceosomal U1 snRNP, which is essential for recognition of the pre-mRNA 5' splice-site and the subsequent assembly of the spliceosome. U1-C is directly involved in initial 5' splice-site recognition for both constitutive and regulated alternative splicing. The interaction with the 5' splice-site seems to precede base-pairing between the pre-mRNA and the U1 snRNA. Stimulates commitment or early (E) complex formation by stabilizing the base pairing of the 5' end of the U1 snRNA and the 5' splice-site region. This Plasmodium chabaudi chabaudi protein is U1 small nuclear ribonucleoprotein C.